A 1091-amino-acid chain; its full sequence is Error-prone DNA polymerase 1 (1091 aa).

The span at Arg1051–Arg1064 shows a compositional bias: basic and acidic residues. The segment at Arg1051–Val1080 is disordered.

The protein belongs to the DNA polymerase type-C family. DnaE2 subfamily.

The protein resides in the cytoplasm. It catalyses the reaction DNA(n) + a 2'-deoxyribonucleoside 5'-triphosphate = DNA(n+1) + diphosphate. DNA polymerase involved in damage-induced mutagenesis and translesion synthesis (TLS). It is not the major replicative DNA polymerase. The sequence is that of Error-prone DNA polymerase 1 from Agrobacterium fabrum (strain C58 / ATCC 33970) (Agrobacterium tumefaciens (strain C58)).